The following is a 444-amino-acid chain: Glutamate--tRNA ligase (444 aa).

A 'HIGH' region motif is present at residues 12–22; the sequence is PSPTGFLHVGG. Positions 213–217 match the 'KMSKS' region motif; the sequence is KMSKR. Lys-216 contacts ATP.

It belongs to the class-I aminoacyl-tRNA synthetase family. Glutamate--tRNA ligase type 1 subfamily. Monomer.

The protein localises to the cytoplasm. It carries out the reaction tRNA(Glu) + L-glutamate + ATP = L-glutamyl-tRNA(Glu) + AMP + diphosphate. Catalyzes the attachment of glutamate to tRNA(Glu) in a two-step reaction: glutamate is first activated by ATP to form Glu-AMP and then transferred to the acceptor end of tRNA(Glu). The sequence is that of Glutamate--tRNA ligase from Methylacidiphilum infernorum (isolate V4) (Methylokorus infernorum (strain V4)).